The sequence spans 116 residues: Large ribosomal subunit protein uL18 (116 aa).

It belongs to the universal ribosomal protein uL18 family. In terms of assembly, part of the 50S ribosomal subunit; part of the 5S rRNA/L5/L18/L25 subcomplex. Contacts the 5S and 23S rRNAs.

Functionally, this is one of the proteins that bind and probably mediate the attachment of the 5S RNA into the large ribosomal subunit, where it forms part of the central protuberance. This is Large ribosomal subunit protein uL18 from Pseudomonas syringae pv. tomato (strain ATCC BAA-871 / DC3000).